The following is a 545-amino-acid chain: SLAIN motif-containing protein 1 (545 aa).

Positions 14–53 (TTNGLVANAELEVKKLQELVRKLEKQNEQLRNRASAVSNC) form a coiled coil. 2 stretches are compositionally biased toward low complexity: residues 268-286 (TTST…SLYS) and 466-481 (IPSS…SGIP). Disordered stretches follow at residues 268–342 (TTST…IRDC) and 461–526 (QGGS…LQPP). Residues 503 to 522 (STANGSSIPRSKIAQPQRSF) are compositionally biased toward polar residues.

This sequence belongs to the SLAIN motif-containing family.

It is found in the cytoplasm. Its subcellular location is the cytoskeleton. Microtubule plus-end tracking protein that might be involved in the regulation of cytoplasmic microtubule dynamics, microtubule organization and microtubule elongation. In Xenopus tropicalis (Western clawed frog), this protein is SLAIN motif-containing protein 1 (slain1).